We begin with the raw amino-acid sequence, 152 residues long: UPF0178 protein YaiI (152 aa).

This sequence belongs to the UPF0178 family.

This chain is UPF0178 protein YaiI, found in Escherichia coli O17:K52:H18 (strain UMN026 / ExPEC).